Reading from the N-terminus, the 1091-residue chain is Exonuclease/helicase subunit RexB (1091 aa).

This sequence belongs to the helicase family. AddB/RexB type 2 subfamily. Heterodimer of RexA (AddA) and RexB. Mg(2+) serves as cofactor.

In terms of biological role, involved in DNA double-strand break repair. Is not involved in recombination during natural competence or in plasmid establishment. Functionally, the heterodimer acts as both an ATP-dependent DNA helicase and an ATP-dependent, dual-direction single-stranded exonuclease. Recognizes the chi site generating a DNA molecule suitable for the initiation of homologous recombination. This subunit has 5' -&gt; 3' nuclease activity but not helicase activity. The polypeptide is Exonuclease/helicase subunit RexB (Streptococcus pneumoniae serotype 4 (strain ATCC BAA-334 / TIGR4)).